We begin with the raw amino-acid sequence, 301 residues long: Homoserine O-acetyltransferase (301 aa).

Catalysis depends on cysteine 142, which acts as the Acyl-thioester intermediate. Lysine 163 and serine 192 together coordinate substrate. The active-site Proton acceptor is the histidine 235. Glutamate 237 is an active-site residue. Position 249 (arginine 249) interacts with substrate.

The protein belongs to the MetA family.

It localises to the cytoplasm. The enzyme catalyses L-homoserine + acetyl-CoA = O-acetyl-L-homoserine + CoA. The protein operates within amino-acid biosynthesis; L-methionine biosynthesis via de novo pathway; O-acetyl-L-homoserine from L-homoserine: step 1/1. Transfers an acetyl group from acetyl-CoA to L-homoserine, forming acetyl-L-homoserine. The protein is Homoserine O-acetyltransferase of Bacillus cereus (strain ZK / E33L).